The following is a 1015-amino-acid chain: Probable beta-galactosidase B (1015 aa).

Positions 1–21 are cleaved as a signal peptide; sequence MAHIYRLLLLLLSNLWFSAAA. N-linked (GlcNAc...) asparagine glycosylation is present at Asn-23. Tyr-90 lines the substrate pocket. The N-linked (GlcNAc...) asparagine glycan is linked to Asn-100. Substrate-binding residues include Asn-135, Ala-136, and Glu-137. A glycan (N-linked (GlcNAc...) asparagine) is linked at Asn-172. Asn-195 provides a ligand contact to substrate. Glu-196 acts as the Proton donor in catalysis. An N-linked (GlcNAc...) asparagine glycan is attached at Asn-211. Substrate is bound at residue Tyr-265. A disulfide bridge connects residues Cys-271 and Cys-324. The active-site Nucleophile is the Glu-308. Residue Tyr-373 coordinates substrate. 9 N-linked (GlcNAc...) asparagine glycosylation sites follow: Asn-411, Asn-441, Asn-456, Asn-554, Asn-679, Asn-735, Asn-775, Asn-821, and Asn-878.

Belongs to the glycosyl hydrolase 35 family.

It localises to the secreted. It carries out the reaction Hydrolysis of terminal non-reducing beta-D-galactose residues in beta-D-galactosides.. In terms of biological role, cleaves beta-linked terminal galactosyl residues from gangliosides, glycoproteins, and glycosaminoglycans. The polypeptide is Probable beta-galactosidase B (lacB) (Neosartorya fischeri (strain ATCC 1020 / DSM 3700 / CBS 544.65 / FGSC A1164 / JCM 1740 / NRRL 181 / WB 181) (Aspergillus fischerianus)).